A 357-amino-acid chain; its full sequence is 3-isopropylmalate dehydrogenase (357 aa).

An NAD(+)-binding site is contributed by 76-89 (GPQWDTIDPALRPE). Positions 96, 106, 134, and 224 each coordinate substrate. Residues Asp224, Asp248, and Asp252 each coordinate Mg(2+). 282-294 (GSAPDIAGKGIAN) lines the NAD(+) pocket.

It belongs to the isocitrate and isopropylmalate dehydrogenases family. LeuB type 1 subfamily. Homodimer. The cofactor is Mg(2+). Requires Mn(2+) as cofactor.

Its subcellular location is the cytoplasm. The catalysed reaction is (2R,3S)-3-isopropylmalate + NAD(+) = 4-methyl-2-oxopentanoate + CO2 + NADH. Its pathway is amino-acid biosynthesis; L-leucine biosynthesis; L-leucine from 3-methyl-2-oxobutanoate: step 3/4. Catalyzes the oxidation of 3-carboxy-2-hydroxy-4-methylpentanoate (3-isopropylmalate) to 3-carboxy-4-methyl-2-oxopentanoate. The product decarboxylates to 4-methyl-2 oxopentanoate. The chain is 3-isopropylmalate dehydrogenase from Xanthomonas axonopodis pv. citri (strain 306).